The following is a 170-amino-acid chain: N-glycosidase R617 (170 aa).

It belongs to the YbiA family.

The catalysed reaction is 2,5-diamino-6-hydroxy-4-(5-phosphoribosylamino)-pyrimidine + H2O = 2,5,6-triamino-4-hydroxypyrimidine + D-ribose 5-phosphate. It carries out the reaction 5-amino-6-(5-phospho-D-ribosylamino)uracil + H2O = 5,6-diaminouracil + D-ribose 5-phosphate. Its function is as follows. Catalyzes the hydrolysis of the N-glycosidic bond in the first two intermediates of riboflavin biosynthesis, which are highly reactive metabolites, yielding relatively innocuous products. Thus, can divert a surplus of harmful intermediates into relatively harmless products and pre-empt the damage these intermediates would otherwise do. May act on other substrates in vivo. The chain is N-glycosidase R617 from Acanthamoeba polyphaga mimivirus (APMV).